Reading from the N-terminus, the 348-residue chain is Fructose-1,6-bisphosphatase class 1 (348 aa).

Mg(2+) contacts are provided by Glu-104, Asp-126, Leu-128, and Asp-129. Substrate contacts are provided by residues 129-132 (DGSS), Asn-221, Tyr-249, and Lys-279. Glu-285 lines the Mg(2+) pocket.

The protein belongs to the FBPase class 1 family. In terms of assembly, homotetramer. It depends on Mg(2+) as a cofactor.

Its subcellular location is the cytoplasm. It carries out the reaction beta-D-fructose 1,6-bisphosphate + H2O = beta-D-fructose 6-phosphate + phosphate. It participates in carbohydrate biosynthesis; Calvin cycle. In Thermosynechococcus vestitus (strain NIES-2133 / IAM M-273 / BP-1), this protein is Fructose-1,6-bisphosphatase class 1.